The chain runs to 87 residues: Large ribosomal subunit protein bL31B (87 aa).

The protein belongs to the bacterial ribosomal protein bL31 family. Type B subfamily. As to quaternary structure, part of the 50S ribosomal subunit.

The chain is Large ribosomal subunit protein bL31B from Shigella boydii serotype 4 (strain Sb227).